Here is a 273-residue protein sequence, read N- to C-terminus: MLKPALEPRGGFSFENCQRNASLERVLPGLKVPHARKTGTTIAGLVFQDGVILGADTRATNDSVVADKSCEKIHFIAPKIYCCGAGVAADAEMTTRMVASKMELHALSTGREPRVATVTRILRQTLFRYQGHVGASLIVGGVDLTGPQLYGVHPHGSYSRLPFTALGSGQDAALAVLEDRFQPNMTLEAAQGLLVEAVTAGILGDLGSGGNVDACVITKTGAKLLRTLSSPTEPVKRSGRYHFVPGTTAVLTQTVKPLTLELVEETVQAMEVE.

At Met-1 the chain carries N-acetylmethionine. Positions Met-1–Gly-39 are cleaved as a propeptide — removed in mature form. Thr-40 functions as the Nucleophile in the catalytic mechanism. Ser-230 is subject to Phosphoserine.

Belongs to the peptidase T1B family. In terms of assembly, the 26S proteasome consists of a 20S proteasome core and two 19S regulatory subunits. The 20S proteasome core is composed of 28 subunits that are arranged in four stacked rings, resulting in a barrel-shaped structure. The two end rings are each formed by seven alpha subunits, and the two central rings are each formed by seven beta subunits. The catalytic chamber with the active sites is on the inside of the barrel. Component of the immunoproteasome, where it displaces the equivalent housekeeping subunit PSMB7. Component of the spermatoproteasome, a form of the proteasome specifically found in testis. (Microbial infection) Interacts with HIV-1 TAT protein. In terms of processing, autocleaved. The resulting N-terminal Thr residue of the mature subunit is responsible for the nucleophile proteolytic activity.

Its subcellular location is the cytoplasm. The protein resides in the nucleus. It carries out the reaction Cleavage of peptide bonds with very broad specificity.. Its function is as follows. The proteasome is a multicatalytic proteinase complex which is characterized by its ability to cleave peptides with Arg, Phe, Tyr, Leu, and Glu adjacent to the leaving group at neutral or slightly basic pH. The proteasome has an ATP-dependent proteolytic activity. This subunit is involved in antigen processing to generate class I binding peptides. This is Proteasome subunit beta type-10 (PSMB10) from Homo sapiens (Human).